We begin with the raw amino-acid sequence, 253 residues long: 2-dehydro-3-deoxy-D-gluconate 5-dehydrogenase (253 aa).

Residue 14–38 (LITGCDTGLGQGMAVGLAEAGCDIV) participates in NAD(+) binding. Ser-145 is a substrate binding site. Tyr-158 serves as the catalytic Proton acceptor.

It belongs to the short-chain dehydrogenases/reductases (SDR) family.

The enzyme catalyses 2-dehydro-3-deoxy-D-gluconate + NAD(+) = 3-deoxy-D-glycero-2,5-hexodiulosonate + NADH + H(+). Its pathway is glycan metabolism; pectin degradation; 2-dehydro-3-deoxy-D-gluconate from pectin: step 5/5. Its function is as follows. Catalyzes the reduction of 2,5-diketo-3-deoxygluconate (DKII or 4,6-dihydroxy-2,5-dioxohexanoate) into 2-keto-3-deoxygluconate (KDG or 2-dehydro-3-deoxygluconate) with a concomitant oxidation of NADH. The polypeptide is 2-dehydro-3-deoxy-D-gluconate 5-dehydrogenase (kduD) (Dickeya dadantii (strain 3937) (Erwinia chrysanthemi (strain 3937))).